The primary structure comprises 632 residues: MKIEERDGLARIAKFETPHGPIETPTVLPVINPNIMNITPQEMKPLGLQGIITNSYIILRTPELRERALREGLHSLIGYDGPIMTDSGTFQSYVYGSIEFNNREVVDFQRRIGSDISTILDVFTTPGTPKPEAEKAVIETYNRMLEVNDEEGIIAGPVQGGVYPDLRQKSAELMNSTNAGYHPIGGVVPLLETYDYSTLVDIIINSKINLSFNKPVHLFGGGHPMFFAFSVYLGVDLFDSASYIKYAKDDRLIYPDGTRDLARITELPQWSPLYDRYTVKEIRDLDKERRSLEIARHNLKAIFMEISEIKERIYEEGLAQYVAQKARSHPSLMKAYSRIMSYSNILEKYEDLSKKTAYFFYDSFSTRNPYVSRINRFTESYLSSNKKDTYAFTYRAWNPGYTNSEFVRDVYQKIDCNALISWSGTFVPAELENTYPIEQTVSSGFEPDPDFSRAKDLIAPFRVDMYKGEKFEGEQVRSFNLNKIRMVADYQFGSGVGRMIFRDDVRINVSKTGRIRGILSKEGRQIATMRNDGFFTLTYYGASLIHSQLKPPAMRVTVSKESAEYNAKGYSVFFKFILGSDENIIAKNDVLVVDEDDVLAAVGKAMVSGRELREYTEGIAVKVHEGRDQSEK.

The Nucleophile role is filled by Asp86. Substrate contacts are provided by Asp121 and Gly186. The PUA domain occupies Ala553–Asp628.

Belongs to the archaeosine tRNA-ribosyltransferase family. Zn(2+) is required as a cofactor.

The catalysed reaction is guanosine(15) in tRNA + 7-cyano-7-deazaguanine = 7-cyano-7-carbaguanosine(15) in tRNA + guanine. The protein operates within tRNA modification; archaeosine-tRNA biosynthesis. Exchanges the guanine residue with 7-cyano-7-deazaguanine (preQ0) at position 15 in the dihydrouridine loop (D-loop) of archaeal tRNAs. The sequence is that of tRNA-guanine(15) transglycosylase from Thermoplasma acidophilum (strain ATCC 25905 / DSM 1728 / JCM 9062 / NBRC 15155 / AMRC-C165).